A 347-amino-acid polypeptide reads, in one-letter code: Protein RecA (347 aa).

65 to 72 (GPESSGKT) is a binding site for ATP. The segment covering 327–336 (KFEPTELSRE) has biased composition (basic and acidic residues). The disordered stretch occupies residues 327 to 347 (KFEPTELSREEGDEDTLEDTM). The span at 337–347 (EGDEDTLEDTM) shows a compositional bias: acidic residues.

It belongs to the RecA family.

It is found in the cytoplasm. In terms of biological role, can catalyze the hydrolysis of ATP in the presence of single-stranded DNA, the ATP-dependent uptake of single-stranded DNA by duplex DNA, and the ATP-dependent hybridization of homologous single-stranded DNAs. It interacts with LexA causing its activation and leading to its autocatalytic cleavage. The chain is Protein RecA from Xylella fastidiosa (strain 9a5c).